Consider the following 282-residue polypeptide: ATP synthase gamma chain (282 aa).

This sequence belongs to the ATPase gamma chain family. In terms of assembly, F-type ATPases have 2 components, CF(1) - the catalytic core - and CF(0) - the membrane proton channel. CF(1) has five subunits: alpha(3), beta(3), gamma(1), delta(1), epsilon(1). CF(0) has three main subunits: a, b and c.

The protein localises to the cell membrane. In terms of biological role, produces ATP from ADP in the presence of a proton gradient across the membrane. The gamma chain is believed to be important in regulating ATPase activity and the flow of protons through the CF(0) complex. This Clostridium botulinum (strain ATCC 19397 / Type A) protein is ATP synthase gamma chain.